The sequence spans 81 residues: Large ribosomal subunit protein bL31B (81 aa).

Belongs to the bacterial ribosomal protein bL31 family. Type B subfamily. Part of the 50S ribosomal subunit.

This Exiguobacterium sibiricum (strain DSM 17290 / CCUG 55495 / CIP 109462 / JCM 13490 / 255-15) protein is Large ribosomal subunit protein bL31B.